We begin with the raw amino-acid sequence, 184 residues long: Cysteine-rich atrial secretory protein (184 aa).

An N-terminal signal peptide occupies residues 1 to 26 (MATFQAHFFAAVMCVGVLGLSKLCGA). Disulfide bonds link Cys29-Cys34, Cys65-Cys111, Cys75-Cys82, Cys123-Cys155, and Cys135-Cys144. N-linked (GlcNAc...) asparagine glycosylation occurs at Asn74.

N-glycosylated. As to expression, highly expressed in atrium. Moderately expressed in the pericardium, pulmonary vein, nephridium, arteria anterior, ovotestis and connective tissue. Low expression found in intestine, lung plexus, diaphragm, subesophageal ganglion, ventricle and digestive gland. Very low expression found in columellar retractor, pedal nerves and cerebral ganglion. Not expressed in hemocytes.

The protein resides in the secreted. The sequence is that of Cysteine-rich atrial secretory protein from Achatina achatina (Giant Ghana snail).